Here is an 85-residue protein sequence, read N- to C-terminus: Putative membrane protein insertion efficiency factor (85 aa).

This sequence belongs to the UPF0161 family.

Its subcellular location is the cell inner membrane. Functionally, could be involved in insertion of integral membrane proteins into the membrane. The protein is Putative membrane protein insertion efficiency factor of Escherichia coli O6:H1 (strain CFT073 / ATCC 700928 / UPEC).